The primary structure comprises 418 residues: 1-deoxy-D-xylulose 5-phosphate reductoisomerase (418 aa).

Positions 32, 33, 34, 35, and 150 each coordinate NADPH. Lys151 lines the 1-deoxy-D-xylulose 5-phosphate pocket. Glu152 serves as a coordination point for NADPH. Asp174 contributes to the Mn(2+) binding site. Residues Ser175, Glu176, Ser200, and His223 each contribute to the 1-deoxy-D-xylulose 5-phosphate site. Mn(2+) is bound at residue Glu176. Residue Gly229 coordinates NADPH. Residues Ser236, Asn241, Lys242, and Glu245 each contribute to the 1-deoxy-D-xylulose 5-phosphate site. Glu245 lines the Mn(2+) pocket.

The protein belongs to the DXR family. It depends on Mg(2+) as a cofactor. The cofactor is Mn(2+).

The enzyme catalyses 2-C-methyl-D-erythritol 4-phosphate + NADP(+) = 1-deoxy-D-xylulose 5-phosphate + NADPH + H(+). Its pathway is isoprenoid biosynthesis; isopentenyl diphosphate biosynthesis via DXP pathway; isopentenyl diphosphate from 1-deoxy-D-xylulose 5-phosphate: step 1/6. Its function is as follows. Catalyzes the NADPH-dependent rearrangement and reduction of 1-deoxy-D-xylulose-5-phosphate (DXP) to 2-C-methyl-D-erythritol 4-phosphate (MEP). In Streptomyces coelicolor (strain ATCC BAA-471 / A3(2) / M145), this protein is 1-deoxy-D-xylulose 5-phosphate reductoisomerase.